Consider the following 807-residue polypeptide: Phenylalanine--tRNA ligase beta subunit (807 aa).

A tRNA-binding domain is found at 39–156 (AGEFSGVVIG…SDAPLGQCVR (118 aa)). One can recognise a B5 domain in the interval 409–488 (PQTKDVNLRR…RIFGYNNIPN (80 aa)). Residues Asp466, Asp472, Glu475, and Glu476 each contribute to the Mg(2+) site. The 94-residue stretch at 713-806 (SRFPANRRDL…LKTELNASLR (94 aa)) folds into the FDX-ACB domain.

This sequence belongs to the phenylalanyl-tRNA synthetase beta subunit family. Type 1 subfamily. In terms of assembly, tetramer of two alpha and two beta subunits. The cofactor is Mg(2+).

Its subcellular location is the cytoplasm. The enzyme catalyses tRNA(Phe) + L-phenylalanine + ATP = L-phenylalanyl-tRNA(Phe) + AMP + diphosphate + H(+). This chain is Phenylalanine--tRNA ligase beta subunit, found in Colwellia psychrerythraea (strain 34H / ATCC BAA-681) (Vibrio psychroerythus).